A 406-amino-acid polypeptide reads, in one-letter code: Probable endo-xylogalacturonan hydrolase A (406 aa).

The first 18 residues, 1-18 (MLYYRNLALLSLLSLSSA), serve as a signal peptide directing secretion. PbH1 repeat units lie at residues 183 to 213 (AKDV…DIGS), 214 to 235 (STHV…ALKP), 237 to 257 (CNYV…SVGS), and 299 to 320 (VKNV…QIQS). Asp228 functions as the Proton donor in the catalytic mechanism. A glycan (N-linked (GlcNAc...) asparagine) is linked at Asn244. The active site involves His251. Asn301 is a glycosylation site (N-linked (GlcNAc...) asparagine).

The protein belongs to the glycosyl hydrolase 28 family.

The protein localises to the secreted. In terms of biological role, pectinolytic enzyme involved in the degradation of xylogalacturonan (xga), a galacturonan backbone heavily substituted with xylose, and which is one important component of the hairy regions of pectin. Activity requires a galacturonic acid backbone substituted with xylose. This is Probable endo-xylogalacturonan hydrolase A (xghA) from Neosartorya fischeri (strain ATCC 1020 / DSM 3700 / CBS 544.65 / FGSC A1164 / JCM 1740 / NRRL 181 / WB 181) (Aspergillus fischerianus).